The sequence spans 41 residues: Photosystem II reaction center protein X (41 aa).

Residues 2-6 (TITPS) lie on the Lumenal side of the membrane. A helical membrane pass occupies residues 7-29 (LKGFFIGLLSGAVVLGLTFAVLI). Residues 30–41 (AISQIDKVQRSL) are Cytoplasmic-facing.

Belongs to the PsbX family. Type 1 subfamily. As to quaternary structure, PSII is composed of 1 copy each of membrane proteins PsbA, PsbB, PsbC, PsbD, PsbE, PsbF, PsbH, PsbI, PsbJ, PsbK, PsbL, PsbM, PsbT, PsbX, PsbY, PsbZ, Psb30/Ycf12, peripheral proteins PsbO, CyanoQ (PsbQ), PsbU, PsbV and a large number of cofactors. It forms dimeric complexes. Part of a photosystem II (PSII) assembly intermediate complex PSII-I; crystallized from a strain deleted of psbJ, it forms monomeric PSII before addition of the oxygen evolving complex. PSII-I includes 3 assembly factors not found in mature PSII (Psb27, Psb28 and Psb34). The cofactor is PSII binds multiple chlorophylls, carotenoids and specific lipids..

It is found in the cellular thylakoid membrane. Involved in the binding and/or turnover of quinones at the Q(B) site of photosystem II (PSII). PSII is a light-driven water plastoquinone oxidoreductase, using light energy to abstract electrons from H(2)O, generating a proton gradient subsequently used for ATP formation. In Thermosynechococcus vestitus (strain NIES-2133 / IAM M-273 / BP-1), this protein is Photosystem II reaction center protein X.